The primary structure comprises 972 residues: Peptidyl-glycine alpha-amidating monooxygenase (972 aa).

Positions 1–20 are cleaved as a signal peptide; it reads MAGFRSLLVLLLVFPSGCVG. The interval 1–494 is peptidylglycine alpha-hydroxylating monooxygenase; sequence MAGFRSLLVL…EGTWEPEHTG (494 aa). Positions 21–30 are excised as a propeptide; that stretch reads FRSPLSVFKR. Over 31–873 the chain is Intragranular; sequence FKETTRSFSN…VPAVLITTLL (843 aa). Disulfide bonds link cysteine 42–cysteine 181, cysteine 76–cysteine 121, cysteine 109–cysteine 126, cysteine 222–cysteine 329, and cysteine 288–cysteine 310. 2 residues coordinate Cu(2+): histidine 102 and histidine 103. Residues histidine 167, histidine 237, histidine 239, and methionine 309 each coordinate Cu(2+). Residues 495-817 are peptidyl-alpha-hydroxyglycine alpha-amidating lyase; the sequence is DFHVEEALDW…STEKMEHRSV (323 aa). 4 NHL repeats span residues 498–541, 567–608, 617–662, and 670–714; these read VEEA…NSFD, AAVL…LDPK, LGRS…FSPS, and GEAS…FKTD. Position 517 (valine 517) interacts with Ca(2+). Residue arginine 530 participates in a protein binding. Residue histidine 582 participates in Zn(2+) binding. A Ca(2+)-binding site is contributed by leucine 584. Cysteine 631 and cysteine 652 form a disulfide bridge. Residue tyrosine 651 coordinates a protein. Histidine 687 is a binding site for Zn(2+). A disulfide bridge links cysteine 699 with cysteine 710. Arginine 703 is a binding site for a protein. Residue asparagine 762 is glycosylated (N-linked (GlcNAc...) asparagine). Residues 766–809 form an NHL 5 repeat; sequence GEIIDVFKPVRKHFDMPHDIAASEDGTVYVGDAHTNTVWKFTST. Histidine 783 is a binding site for Zn(2+). Residue aspartate 784 coordinates Ca(2+). Residues 874 to 897 form a helical membrane-spanning segment; that stretch reads VIPVVVLLAIALFIRWKKSRAFGD. Over 898–972 the chain is Cytoplasmic; sequence SERKLEASSG…APPPAPAPSS (75 aa). Residues 925–942 form an interaction with RASSF9 region; sequence NFFASRKGYSRKGFDRLS. 2 positions are modified to phosphoserine: serine 929 and serine 942. The interval 937–972 is disordered; that stretch reads GFDRLSTEGSDQEKDEDASESEEEYSAPPPAPAPSS. Residue threonine 943 is modified to Phosphothreonine. Phosphoserine; by UHMK1 is present on serine 946. Residues 949–961 show a composition bias toward acidic residues; the sequence is EKDEDASESEEEY. Serine 957 carries the phosphoserine modification. Over residues 963 to 972 the composition is skewed to pro residues; the sequence is APPPAPAPSS.

In the C-terminal section; belongs to the peptidyl-alpha-hydroxyglycine alpha-amidating lyase family. The protein in the N-terminal section; belongs to the copper type II ascorbate-dependent monooxygenase family. As to quaternary structure, monomer. Interacts with RASSF9. Requires Zn(2+) as cofactor. Cu(2+) is required as a cofactor.

It localises to the cytoplasmic vesicle. Its subcellular location is the secretory vesicle membrane. The catalysed reaction is a [peptide]-C-terminal glycine + 2 L-ascorbate + O2 = a [peptide]-C-terminal (2S)-2-hydroxyglycine + 2 monodehydro-L-ascorbate radical + H2O. It carries out the reaction a [peptide]-C-terminal (2S)-2-hydroxyglycine = a [peptide]-C-terminal amide + glyoxylate. The enzyme catalyses N-dodecanoylglycine + 2 L-ascorbate + O2 = N-dodecanoyl-(2S)-hydroxyglycine + 2 monodehydro-L-ascorbate radical + H2O. It catalyses the reaction N-dodecanoyl-(2S)-hydroxyglycine = dodecanamide + glyoxylate. The catalysed reaction is N-(9Z,12Z,15Z)-octadecatrienoylglycine + 2 L-ascorbate + O2 = N-(9Z,12Z,15Z)-octadecatrienoyl-(2S)-hydroxyglycine + 2 monodehydro-L-ascorbate radical + H2O. It carries out the reaction N-(9Z,12Z,15Z)-octadecatrienoyl-(2S)-hydroxyglycine = (9Z,12Z,15Z)-octadecatrienamide + glyoxylate. The enzyme catalyses N-(9Z-octadecenoyl)glycine + 2 L-ascorbate + O2 = N-(9Z-octadecenoyl)-(2S)-hydroxyglycine + 2 monodehydro-L-ascorbate radical + H2O. It catalyses the reaction N-(9Z-octadecenoyl)-(2S)-hydroxyglycine = (9Z)-octadecenamide + glyoxylate. The catalysed reaction is N-tetradecanoylglycine + 2 L-ascorbate + O2 = N-tetradecanoyl-(2S)-hydroxyglycine + 2 monodehydro-L-ascorbate radical + H2O. It carries out the reaction N-tetradecanoyl-(2S)-hydroxyglycine = tetradecamide + glyoxylate. The enzyme catalyses N-decanoylglycine + 2 L-ascorbate + O2 = N-decanoyl-(2S)-hydroxyglycine + 2 monodehydro-L-ascorbate radical + H2O. It catalyses the reaction N-decanoyl-(2S)-hydroxyglycine = decanamide + glyoxylate. The catalysed reaction is N-octanoylglycine + 2 L-ascorbate + O2 = N-octanoyl-(2S)-hydroxyglycine + 2 monodehydro-L-ascorbate radical + H2O. It carries out the reaction N-octanoyl-(2S)-hydroxyglycine = octanamide + glyoxylate. Its activity is regulated as follows. PAM activity is inhibited by EDTA, phenylglyoxal and diethyl pyrocarbonate. PAL activity is stimulated by cadmium and inhibited by mercury. Functionally, bifunctional enzyme that catalyzes amidation of the C-terminus of proteins. Alpha-amidation is present at the C-terminus of many endocrine hormones and neuropeptides and is required for their activity. C-terminal amidation also takes place in response to protein fragmentation triggered by oxidative stress, promoting degradation of amidated protein fragments by the proteasome. Alpha-amidation involves two sequential reactions, both of which are catalyzed by separate catalytic domains of the enzyme. The first step, catalyzed by peptidyl alpha-hydroxylating monooxygenase (PHM) domain, is the copper-, ascorbate-, and O2- dependent stereospecific hydroxylation (with S stereochemistry) at the alpha-carbon (C-alpha) of the C-terminal glycine of the peptidylglycine substrate. The second step, catalyzed by the peptidylglycine amidoglycolate lyase (PAL) domain, is the zinc-dependent cleavage of the N-C-alpha bond, producing the alpha-amidated peptide and glyoxylate. Similarly, catalyzes the two-step conversion of an N-fatty acylglycine to a primary fatty acid amide and glyoxylate. The chain is Peptidyl-glycine alpha-amidating monooxygenase (PAM) from Bos taurus (Bovine).